Reading from the N-terminus, the 43-residue chain is Mu-conotoxin-like CalTx 12.2.1E (43 aa).

Residue arginine 1 is a propeptide. Disulfide bonds link cysteine 4-cysteine 16, cysteine 11-cysteine 24, cysteine 18-cysteine 29, and cysteine 23-cysteine 35. The residue at position 31 (tryptophan 31) is a 6'-bromotryptophan. Position 36 is a 4-hydroxyproline (proline 36). Tryptophan 40 is modified (6'-bromotryptophan).

Expressed by the venom duct.

It is found in the secreted. In terms of biological role, mu-conotoxins block voltage-gated sodium channels. This toxin reversibly blocks voltage-gated sodium channel in cephalopods, with no alteration in the voltage dependence of sodium conductance or on the kinetics of inactivation. In Californiconus californicus (California cone), this protein is Mu-conotoxin-like CalTx 12.2.1E.